A 132-amino-acid polypeptide reads, in one-letter code: MAANDKEKWGIAHIFASFNNTIITVTDLSGAETVTKSSGGMVVKQDRNESSPYAAMQMAANVAAIAREKGIVGVHVKVRAPGQGKQRSPGPGAQAAIRALARAGMRIGRIEDVTPVPHDSCRPKGGRRGRRV.

The disordered stretch occupies residues glycine 108–valine 132.

It belongs to the universal ribosomal protein uS11 family. As to quaternary structure, part of the 30S ribosomal subunit.

Located on the platform of the 30S subunit. In Methanoregula boonei (strain DSM 21154 / JCM 14090 / 6A8), this protein is Small ribosomal subunit protein uS11.